The sequence spans 521 residues: MHSLDEPLDLKLSITKLRAAREKRERTLGVVRHHALHRELGLVDDSPAPGSPGSPPPGFLLNPKFPEKVDGRFSAAPLVDLSLSPPSGLDSPNGSSSLSPECQGNGDLPPLPTAVDFQPLRYLDGVPSSFQFFLPLGSGGALHLPASSFLPPPKDKCLSPELPLAKQLVCRWAKCNQLFELLQDLVDHVNDHHVKPEQDARYCCHWEGCARHGRGFNARYKMLIHIRTHTNEKPHRCPTCNKSFSRLENLKIHNRSHTGEKPYVCPYEGCNKRYSNSSDRFKHTRTHYVDKPYYCKMPGCHKRYTDPSSLRKHIKAHGHFVSHEQQELLQLRPPPKPPLPTPDSGSYVSGAQIIIPNPAALFGGPSLPGLPLPLPPGPLDLSALACGNGGGGGGGIGPGLPGSVLPLNLAKNPLLPSPFGAGGLGLPVVSLLGGSAGSKAEGEKGRGSVPARVLGLEDHKTPLERTERSRSRPSPDGLPLLPGTVLDLSTGNSAASSPEVLTPGWVVIPPGSVLLKPAVVN.

The interval 35–174 (ALHRELGLVD…AKQLVCRWAK (140 aa)) is interaction with CTNND1. Disordered regions lie at residues 41 to 63 (GLVD…LLNP) and 84 to 110 (SPPS…DLPP). Residues 49–58 (PGSPGSPPPG) show a composition bias toward pro residues. The tract at residues 71-137 (GRFSAAPLVD…SSFQFFLPLG (67 aa)) is transcription activation. Residues 84–100 (SPPSGLDSPNGSSSLSP) show a composition bias toward low complexity. Positions 148-171 (SFLPPPKDKCLSPELPLAKQLVCR) are transcription repression. The C2H2-type 1 zinc-finger motif lies at 168 to 193 (LVCRWAKCNQLFELLQDLVDHVNDHH). The segment at 202–229 (YCCHWEGCARHGRGFNARYKMLIHIRTH) adopts a C2H2-type 2; atypical zinc-finger fold. C2H2-type zinc fingers lie at residues 235 to 257 (HRCP…NRSH), 263 to 287 (YVCP…TRTH), and 293 to 317 (YYCK…IKAH). The interval 436 to 501 (AGSKAEGEKG…NSAASSPEVL (66 aa)) is disordered. A compositionally biased stretch (basic and acidic residues) spans 455–470 (GLEDHKTPLERTERSR). Polar residues predominate over residues 487-496 (DLSTGNSAAS).

This sequence belongs to the GLI C2H2-type zinc-finger protein family. Interacts with CTBP1 and HDAC3. Interacts with CTNNB1 and CTNND1. Interacts with SUFU. In terms of processing, C-terminus cleavage is induced by interaction with CTNND1 and enhances by Src tyrosine kinase. In terms of tissue distribution, expressed at high levels in kidney, and at lower levels in heart and lung.

The protein resides in the nucleus speckle. It is found in the cytoplasm. In terms of biological role, can act either as a transcriptional repressor or as a transcriptional activator, depending on the cell context. Acts as a repressor of the Hedgehog signaling pathway. Represses the Hedgehog-dependent expression of Wnt4. Necessary to maintain the differentiated epithelial phenotype in renal cells through the inhibition of SNAI1, which itself induces the epithelial-to-mesenchymal transition. Represses transcriptional activation by CTNNB1 in the Wnt signaling pathway. May act by recruiting the corepressors CTBP1 and HDAC3. May be involved in neuron differentiation. This is Zinc finger protein GLIS2 (Glis2) from Mus musculus (Mouse).